The sequence spans 243 residues: Purine nucleoside phosphorylase YfiH (243 aa).

3 residues coordinate Zn(2+): histidine 71, cysteine 107, and histidine 124.

Belongs to the purine nucleoside phosphorylase YfiH/LACC1 family. Homodimer. Requires Cu(2+) as cofactor. Zn(2+) serves as cofactor.

The catalysed reaction is adenosine + phosphate = alpha-D-ribose 1-phosphate + adenine. The enzyme catalyses S-methyl-5'-thioadenosine + phosphate = 5-(methylsulfanyl)-alpha-D-ribose 1-phosphate + adenine. It catalyses the reaction inosine + phosphate = alpha-D-ribose 1-phosphate + hypoxanthine. It carries out the reaction adenosine + H2O + H(+) = inosine + NH4(+). Its function is as follows. Purine nucleoside enzyme that catalyzes the phosphorolysis of adenosine and inosine nucleosides, yielding D-ribose 1-phosphate and the respective free bases, adenine and hypoxanthine. Also catalyzes the phosphorolysis of S-methyl-5'-thioadenosine into adenine and S-methyl-5-thio-alpha-D-ribose 1-phosphate. Also has adenosine deaminase activity. May also act as a polyphenol oxidase: able to oxidize syringaldazine and 2,2'-azino-bis(3-ethylbenzthiazoline-6-sulfonic acid) (ABTS) in vitro. This is Purine nucleoside phosphorylase YfiH from Escherichia coli (strain K12).